A 465-amino-acid polypeptide reads, in one-letter code: Chromosomal replication initiator protein DnaA (465 aa).

The domain I, interacts with DnaA modulators stretch occupies residues 1–84 (MSLSLWQQCL…RFEVGSKPLV (84 aa)). Residues 84–128 (VQAISQPAQPHHKQVSAAPQQQVRSAPVRPSWDNSPAQAEHTYRS) are domain II. The interval 91–120 (AQPHHKQVSAAPQQQVRSAPVRPSWDNSPA) is disordered. The segment at 129–345 (NVNPKHTFDN…GALNRVIANA (217 aa)) is domain III, AAA+ region. Positions 173, 175, 176, and 177 each coordinate ATP. The interval 346–465 (NFTGRSITID…FSNLIRTLSS (120 aa)) is domain IV, binds dsDNA.

The protein belongs to the DnaA family. Oligomerizes as a right-handed, spiral filament on DNA at oriC.

It localises to the cytoplasm. In terms of biological role, plays an essential role in the initiation and regulation of chromosomal replication. ATP-DnaA binds to the origin of replication (oriC) to initiate formation of the DNA replication initiation complex once per cell cycle. Binds the DnaA box (a 9 base pair repeat at the origin) and separates the double-stranded (ds)DNA. Forms a right-handed helical filament on oriC DNA; dsDNA binds to the exterior of the filament while single-stranded (ss)DNA is stabiized in the filament's interior. The ATP-DnaA-oriC complex binds and stabilizes one strand of the AT-rich DNA unwinding element (DUE), permitting loading of DNA polymerase. After initiation quickly degrades to an ADP-DnaA complex that is not apt for DNA replication. Binds acidic phospholipids. This chain is Chromosomal replication initiator protein DnaA, found in Pectobacterium carotovorum subsp. carotovorum (strain PC1).